A 134-amino-acid polypeptide reads, in one-letter code: Ribosome-binding factor A (134 aa).

It belongs to the RbfA family. Monomer. Binds 30S ribosomal subunits, but not 50S ribosomal subunits or 70S ribosomes.

Its subcellular location is the cytoplasm. Functionally, one of several proteins that assist in the late maturation steps of the functional core of the 30S ribosomal subunit. Associates with free 30S ribosomal subunits (but not with 30S subunits that are part of 70S ribosomes or polysomes). Required for efficient processing of 16S rRNA. May interact with the 5'-terminal helix region of 16S rRNA. This chain is Ribosome-binding factor A, found in Tolumonas auensis (strain DSM 9187 / NBRC 110442 / TA 4).